A 279-amino-acid chain; its full sequence is Small ribosomal subunit protein uS2 (279 aa).

Belongs to the universal ribosomal protein uS2 family. As to quaternary structure, component of the small ribosomal subunit. Mature ribosomes consist of a small (40S) and a large (60S) subunit. The 40S subunit contains about 33 different proteins and 1 molecule of RNA (18S). The 60S subunit contains about 49 different proteins and 3 molecules of RNA (28S, 5.8S and 5S). Interacts with ribosomal protein S21.

The protein localises to the cytoplasm. Functionally, required for the assembly and/or stability of the 40S ribosomal subunit. Required for the processing of the 20S rRNA-precursor to mature 18S rRNA in a late step of the maturation of 40S ribosomal subunits. In Schistosoma japonicum (Blood fluke), this protein is Small ribosomal subunit protein uS2.